The following is a 141-amino-acid chain: Hemoglobin subunit alpha-A (141 aa).

A Globin domain is found at 1-141 (VLSASDKSNV…VGTVLTAKYR (141 aa)). H58 provides a ligand contact to O2. H87 provides a ligand contact to heme b.

The protein belongs to the globin family. In terms of assembly, heterotetramer of two alpha chains and two beta chains. As to expression, red blood cells.

Its function is as follows. Involved in oxygen transport from the lung to the various peripheral tissues. In Streptopelia orientalis (Eastern turtle dove), this protein is Hemoglobin subunit alpha-A (HBAA).